Here is a 136-residue protein sequence, read N- to C-terminus: Serine--glyoxylate aminotransferase (136 aa).

The protein belongs to the class-V pyridoxal-phosphate-dependent aminotransferase family. In terms of assembly, homodimer. Pyridoxal 5'-phosphate serves as cofactor. As to expression, expressed in leaves but not in root tissue or seedlings.

The protein resides in the peroxisome. It catalyses the reaction glyoxylate + L-serine = 3-hydroxypyruvate + glycine. The enzyme catalyses glyoxylate + L-alanine = glycine + pyruvate. Its activity is regulated as follows. Inhibited by aminooxyacetate. The protein is Serine--glyoxylate aminotransferase of Zea mays (Maize).